The primary structure comprises 113 residues: U11-theraphotoxin-Hhn1a (113 aa).

The signal sequence occupies residues 1–21 (MDTVRVAFLLVLVLAVSLGQA). Residues 22-74 (DKDENRMEMQEKTEQGKSYLDFAENLLLQKLEELEAKLLEEDSEESRNSRQKR) constitute a propeptide that is removed on maturation. Over residues 60-69 (LEEDSEESRN) the composition is skewed to basic and acidic residues. The tract at residues 60 to 83 (LEEDSEESRNSRQKRCIGEGVPCD) is disordered. Cystine bridges form between C75/C90, C82/C95, and C89/C110.

This sequence belongs to the neurotoxin 14 (magi-1) family. 01 (HNTX-16) subfamily. Expressed by the venom gland.

The protein localises to the secreted. Probable ion channel inhibitor. The protein is U11-theraphotoxin-Hhn1a of Cyriopagopus hainanus (Chinese bird spider).